Reading from the N-terminus, the 152-residue chain is 3-dehydroquinate dehydratase (152 aa).

Tyr26 functions as the Proton acceptor in the catalytic mechanism. Residues Asn78, His84, and Asp91 each coordinate substrate. The active-site Proton donor is the His104. Substrate is bound by residues 105-106 and Arg115; that span reads LS.

It belongs to the type-II 3-dehydroquinase family. As to quaternary structure, homododecamer.

The enzyme catalyses 3-dehydroquinate = 3-dehydroshikimate + H2O. The protein operates within metabolic intermediate biosynthesis; chorismate biosynthesis; chorismate from D-erythrose 4-phosphate and phosphoenolpyruvate: step 3/7. In terms of biological role, catalyzes a trans-dehydration via an enolate intermediate. The sequence is that of 3-dehydroquinate dehydratase from Idiomarina loihiensis (strain ATCC BAA-735 / DSM 15497 / L2-TR).